We begin with the raw amino-acid sequence, 411 residues long: Anaerobic sulfatase-maturating enzyme homolog AslB (411 aa).

A Radical SAM core domain is found at 3-250 (QQVPTRAFHV…LVAIFDHWIK (248 aa)). Residues Cys-21 and Cys-25 each contribute to the [4Fe-4S] cluster site. Tyr-27 contacts S-adenosyl-L-methionine. Residue Cys-28 participates in [4Fe-4S] cluster binding. Residues Gly-74, Ser-129, and Arg-141 each contribute to the S-adenosyl-L-methionine site. Residues Cys-276, Cys-282, and Cys-297 each contribute to the [4Fe-4S] cluster site. The active-site Proton acceptor is Asp-298. [4Fe-4S] cluster-binding residues include Cys-339, Cys-342, Cys-348, Cys-352, and Cys-371.

The protein belongs to the radical SAM superfamily. Anaerobic sulfatase-maturating enzyme family. The cofactor is [4Fe-4S] cluster.

In Escherichia coli (strain K12), this protein is Anaerobic sulfatase-maturating enzyme homolog AslB (aslB).